The primary structure comprises 816 residues: Homeobox-leucine zipper protein ROC9 (816 aa).

Residues 26 to 104 (VFGRKNGPAA…RRKNYHRHTA (79 aa)) form a disordered region. Basic residues predominate over residues 92–101 (KKRRRKNYHR). A DNA-binding region (homeobox) is located at residues 95 to 154 (RRKNYHRHTAEQIRIMEALFKESPHPDERQRQQVSKQLGLSARQVKFWFQNRRTQIKAVQ). The stretch at 149 to 182 (QIKAVQERHENSLLKSELEKLQDEHRAMRELAKK) forms a coiled coil. The disordered stretch occupies residues 265–296 (KSAADGIASPPCSASAGAMQTNSRSPPLHDHD). The 240-residue stretch at 302 to 541 (HDDDKPRILE…LQLQCERMVF (240 aa)) folds into the START domain.

The protein belongs to the HD-ZIP homeobox family. Class IV subfamily.

It localises to the nucleus. Probable transcription factor. The sequence is that of Homeobox-leucine zipper protein ROC9 (ROC9) from Oryza sativa subsp. japonica (Rice).